Reading from the N-terminus, the 667-residue chain is Probable potassium transport system protein Kup (667 aa).

The next 12 membrane-spanning stretches (helical) occupy residues Gly-16 to Met-36, Val-58 to Leu-78, Trp-101 to Pro-121, Thr-146 to Gly-166, Thr-167 to Ile-187, Ile-221 to Leu-241, Trp-253 to Ala-273, Val-294 to Gly-314, Leu-343 to Phe-363, Tyr-373 to Ile-393, Pro-399 to Ala-419, and Val-431 to Ile-451.

The protein belongs to the HAK/KUP transporter (TC 2.A.72) family.

The protein localises to the cell membrane. The enzyme catalyses K(+)(in) + H(+)(in) = K(+)(out) + H(+)(out). Functionally, transport of potassium into the cell. Likely operates as a K(+):H(+) symporter. The chain is Probable potassium transport system protein Kup from Streptococcus equi subsp. zooepidemicus (strain H70).